A 54-amino-acid chain; its full sequence is uncharacterized protein (54 aa).

To B.subtilis XkdX.

This is an uncharacterized protein from Bacillus subtilis (strain 168).